A 1503-amino-acid polypeptide reads, in one-letter code: MSHANRKEITGLTRMTPKGLKELCKKDKLYQTPRLNDVLYLHYQGFQCIENLEEYTELKCLWLECNAISEIQGLEKLGKLKCLFLQNNLITKIENLDPCRELDTLNLSSNHIRKIQNIGTNILPVLNTLTIASNYLKDSDSLSDLIQCKTLSVLDLSNNRIDDILIVKIFEQMVSLKVLVLQGNPVVSRLPQYRKTLILACKELTYLDSRPVFPRDRACAEAWKRDGYEGERKENNRWKRAERRKTRESINCTIRMRNSHRPPDQQDPLLRSSDSEDDTCTETTRKKVALENDCVDDLWEEVSCEQPISDHGTSTSSSVEDKDGTSSQDDLIAEKLSNRGTLEGRPTVLYENEVSNIKSVNQNIKNFEPRSIETKVFQDVSKISPIIIEEKRVPNINLNNEPSDVKNRKVIKCEKTGYTSTGQVLKENVFDEDAEIKNVEDMVQCQDIIKSNEDMNSEFVVSTKLEKDVEQTCIALRNEAQCKELDEDQSIKEIESKLINEMYENVAADDHDKHNETVDLNLKKTASAQHARTFFFEENKMTRRFYQEDKKSSLLAKSKEEALLEEDCIISNEKCAYDLEEIGRQMEEDLAELRQSTQKLVGFSIDEDADSKTDSEIDEEDLMAQQDPYSPLLQQQFKDRRMKIMLKEETKAQGESIRDLNITLSNESSSDDKQDQLFAKLLDDATENIPKRIFGTGCDSLSSAWPQEECLLQLTLSEVKETPDQEIVFKNSITNSSSFEEANEICVRIDQKMAEEEAALGKLLHDLENEANTKVKHDETNSSKESDAARICTSLLDDIMVELTFNEKRWHEKPKSFKFGPIESDDEFSYSFEPQLEKLVPPALEDPARGKSLRECLDTFSDFVSSMADPKLPLMLGRNPTSGVEKIRAAQELLKSKNLAELYADTAESLNSQVAKEIEKRKRRVAASATRCFNQRDKYDDTLELVQNRLMIVKKDSGDLEELPPPPPLISDTESEDYDTAEDEYTPGNGGHKHTHGSKPQDSKEHLMNNLLKQKQDKPDTVEEVGKKNDHDEDEFYSLEAMTTFGNLDAEFFHKLDLQKVNDSEDSESAINCMRSYNELQAYMKSGSLKHQLNSEDTKMLQTMFSTVASDGKPKLRNPKGEEEDDLLKKMVLRMKEYEEREHQLQLVPHEIPRELSPIKLSLGGSKLFEQKNKIPETGLVHAENELTGNIQFIDNKKTNNDKSTDAIEKNCEPLVKTSCQTSNKSIDDDIQSDVSTDYESGEEVLVVEPPKLSDAVLKSLYSDGFEADLKMVHELEEATRRNLYRYHSNVMHNSTNNHSFSTKKTLPTKTSTSEQSVGAKAKWAKIAERLHEFLDPETILRKEQIGERDACEDSEDEDFAFEENNFEKDEKLIISEEYNSTQNICDGNSGPSKLDGSDQFASIKGFENITEMPTYNMELNSQSKKKTSEKLSNEIENIITTCSSFEAPTDSIGIEYFEDPTLTQINPEGLKTEQIECNLQILNEDGDVVVQELSVNAQVSFE.

6 LRR repeats span residues 34–56 (RLNDVLYLHYQGFQCIENLEEYT), 57–78 (ELKCLWLECNAISEIQGLEKLG), 79–100 (KLKCLFLQNNLITKIENLDPCR), 101–122 (ELDTLNLSSNHIRKIQNIGTNI), 125–146 (VLNTLTIASNYLKDSDSLSDLI), and 150–171 (TLSVLDLSNNRIDDILIVKIFE). In terms of domain architecture, LRRCT spans 185-223 (PVVSRLPQYRKTLILACKELTYLDSRPVFPRDRACAEAW). 4 disordered regions span residues 249–280 (SINCTIRMRNSHRPPDQQDPLLRSSDSEDDTC), 305–328 (EQPISDHGTSTSSSVEDKDGTSSQ), 956–1033 (DSGD…DHDE), and 1295–1315 (STNNHSFSTKKTLPTKTSTSE). Residues 973–985 (TESEDYDTAEDEY) are compositionally biased toward acidic residues. A compositionally biased stretch (basic and acidic residues) spans 1014–1031 (QKQDKPDTVEEVGKKNDH). A compositionally biased stretch (low complexity) spans 1303–1314 (TKKTLPTKTSTS).

It belongs to the DNAAF1 family.

It is found in the cell projection. It localises to the cilium. In terms of biological role, cilium-specific protein required for cilia structures. This chain is Dynein axonemal assembly factor 1 homolog (dtr), found in Drosophila erecta (Fruit fly).